Reading from the N-terminus, the 114-residue chain is Monothiol glutaredoxin-S8 (114 aa).

Positions 1–113 (MDRVTRLASQ…PLLRDAGALW (113 aa)) constitute a Glutaredoxin domain. Cys21 serves as a coordination point for [2Fe-2S] cluster.

This sequence belongs to the glutaredoxin family. CC-type subfamily.

The protein resides in the cytoplasm. Its function is as follows. May only reduce GSH-thiol disulfides, but not protein disulfides. This is Monothiol glutaredoxin-S8 (GRXS8) from Oryza sativa subsp. japonica (Rice).